The following is a 239-amino-acid chain: Proteasome activator complex subunit 2 (239 aa).

Ala-2 bears the N-acetylalanine mark. Position 10 is a phosphoserine (Ser-10). The interval 65–86 (DIPIPDPPPKDDEMETDKQEKK) is disordered. Over residues 72-86 (PPKDDEMETDKQEKK) the composition is skewed to basic and acidic residues.

This sequence belongs to the PA28 family. As to quaternary structure, heterodimer of PSME1 and PSME2, which forms a hexameric ring.

Functionally, implicated in immunoproteasome assembly and required for efficient antigen processing. The PA28 activator complex enhances the generation of class I binding peptides by altering the cleavage pattern of the proteasome. In Sus scrofa (Pig), this protein is Proteasome activator complex subunit 2 (PSME2).